The primary structure comprises 372 residues: Peroxisomal biogenesis factor 3 (372 aa).

Residues 1–15 (MLRSMWNFLKRHKKK) are Cytoplasmic-facing. A targeting to peroxisomes region spans residues 1-45 (MLRSMWNFLKRHKKKCIFLGTVLGGVYILGKYGQKKIREIQEREA). The helical transmembrane segment at 16–36 (CIFLGTVLGGVYILGKYGQKK) threads the bilayer. The Peroxisomal segment spans residues 37-116 (IREIQEREAA…LKIISFTRSI (80 aa)). A helical transmembrane segment spans residues 117–140 (VAVYSTCMLVVLLRVQLNIIGGYI). The interval 120 to 136 (YSTCMLVVLLRVQLNII) is interaction with PEX19. At 141–372 (YLDNATVGKN…AFSTPQQLEK (232 aa)) the chain is on the cytoplasmic side.

Belongs to the peroxin-3 family. In terms of assembly, interacts with PEX19. As to expression, identified in all tissues analyzed, with the strongest expression in liver and in testis.

The protein localises to the peroxisome membrane. Involved in peroxisome biosynthesis and integrity. Assembles membrane vesicles before the matrix proteins are translocated. As a docking factor for PEX19, is necessary for the import of peroxisomal membrane proteins in the peroxisomes. The sequence is that of Peroxisomal biogenesis factor 3 (Pex3) from Mus musculus (Mouse).